Reading from the N-terminus, the 347-residue chain is NADH-ubiquinone oxidoreductase chain 2 (347 aa).

The next 10 helical transmembrane spans lie at 13-33, 59-79, 96-116, 122-142, 149-169, 178-198, 200-220, 240-260, 276-296, and 325-345; these read VILG…WIGF, YFFT…LNLM, MIMT…FWVP, IPLS…LTVL, INLT…GWGG, IMAY…IYNP, MTLL…MLFM, IVTI…LTGF, IILP…YMRL, and LLTP…MIII.

The protein belongs to the complex I subunit 2 family. Core subunit of respiratory chain NADH dehydrogenase (Complex I) which is composed of 45 different subunits. Interacts with TMEM242.

It localises to the mitochondrion inner membrane. The enzyme catalyses a ubiquinone + NADH + 5 H(+)(in) = a ubiquinol + NAD(+) + 4 H(+)(out). Its function is as follows. Core subunit of the mitochondrial membrane respiratory chain NADH dehydrogenase (Complex I) which catalyzes electron transfer from NADH through the respiratory chain, using ubiquinone as an electron acceptor. Essential for the catalytic activity and assembly of complex I. In Molossus ater (Black mastiff bat), this protein is NADH-ubiquinone oxidoreductase chain 2.